Here is a 415-residue protein sequence, read N- to C-terminus: Tyrosine--tRNA ligase (415 aa).

Residue tyrosine 34 participates in L-tyrosine binding. The 'HIGH' region signature appears at 39 to 48 (PTADSLHLGH). L-tyrosine is bound by residues tyrosine 164 and glutamine 168. Positions 226 to 230 (KFGKS) match the 'KMSKS' region motif. Residue lysine 229 participates in ATP binding. Residues 348–415 (KNIVDFLVDG…KKKYFLGKIK (68 aa)) enclose the S4 RNA-binding domain.

It belongs to the class-I aminoacyl-tRNA synthetase family. TyrS type 1 subfamily. Homodimer.

It localises to the cytoplasm. It carries out the reaction tRNA(Tyr) + L-tyrosine + ATP = L-tyrosyl-tRNA(Tyr) + AMP + diphosphate + H(+). Its function is as follows. Catalyzes the attachment of tyrosine to tRNA(Tyr) in a two-step reaction: tyrosine is first activated by ATP to form Tyr-AMP and then transferred to the acceptor end of tRNA(Tyr). This chain is Tyrosine--tRNA ligase, found in Leuconostoc citreum (strain KM20).